A 1400-amino-acid polypeptide reads, in one-letter code: ABC transporter G family member 30 (1400 aa).

Asn-116 is a glycosylation site (N-linked (GlcNAc...) asparagine). The 274-residue stretch at 141–414 (LLSEFICSKK…FEEFGFKCPE (274 aa)) folds into the ABC transporter 1 domain. Position 174–181 (174–181 (GPPGCGKT)) interacts with ATP. A glycan (N-linked (GlcNAc...) asparagine) is linked at Asn-472. The ABC transmembrane type-2 1 domain maps to 492–704 (EMLKACSRRE…AEIGLTANEF (213 aa)). 7 helical membrane passes run 510-530 (FIYL…MTVF), 553-573 (LFRL…RLGV), 582-602 (FYPA…LSVL), 628-648 (FLIL…IAAI), 652-672 (IIAS…FGGF), 679-699 (MPAW…EIGL), and 738-758 (TAFG…VLAL). The ABC transporter 2 domain maps to 808-1053 (VTFQNVQYYI…VIEYFESFSG (246 aa)). Position 845–852 (845–852 (GVSGAGKT)) interacts with ATP. 2 N-linked (GlcNAc...) asparagine glycosylation sites follow: Asn-899 and Asn-1040. The ABC transmembrane type-2 2 domain occupies 1125–1339 (VQLKACLWKQ…VLEGLLSSQY (215 aa)). Helical transmembrane passes span 1144-1164 (HNIT…LLFW), 1179-1199 (IFGS…AAVI), 1228-1248 (VLIE…IVYP), 1263-1283 (LYSI…MVAL), 1289-1309 (MAVT…GFVI), 1317-1337 (WWIW…LLSS), and 1372-1392 (VVAF…AFFM).

The protein belongs to the ABC transporter superfamily. ABCG family. PDR (TC 3.A.1.205) subfamily. In terms of tissue distribution, confined to roots. In seeds, mainly expressed in the embryo and, to a lesser extent, in the endosperm.

The protein resides in the cell membrane. It carries out the reaction abscisate(out) + ATP + H2O = abscisate(in) + ADP + phosphate + H(+). Together with ABCG40, import into the embryo the abscisic acid (ABA) delivered from the endosperm via ABCG25 and ABCG31-mediated export to suppress radicle extension and subsequent embryonic growth. Involved in root secretion of phytochemicals (phenolics and sugars) which regulate soil microbiota, influencing both fungal and bacterial communities. May be a general defense protein. The polypeptide is ABC transporter G family member 30 (Arabidopsis thaliana (Mouse-ear cress)).